We begin with the raw amino-acid sequence, 44 residues long: Photosystem I reaction center subunit IX (44 aa).

The chain crosses the membrane as a helical span at residues 7–27; sequence YLSVAPVASTLWFVALAGLLI.

Belongs to the PsaJ family.

Its subcellular location is the plastid. It localises to the chloroplast thylakoid membrane. In terms of biological role, may help in the organization of the PsaE and PsaF subunits. The chain is Photosystem I reaction center subunit IX from Cicer arietinum (Chickpea).